An 81-amino-acid polypeptide reads, in one-letter code: Putative defensin-like protein 25 (81 aa).

Residues 1-23 form the signal peptide; sequence MASLKVFSFALILVLTFSVDVEG. 4 cysteine pairs are disulfide-bonded: C33–C81, C43–C68, C52–C77, and C56–C79.

This sequence belongs to the DEFL family.

The protein resides in the secreted. The chain is Putative defensin-like protein 25 from Arabidopsis thaliana (Mouse-ear cress).